The chain runs to 264 residues: Teichoic acids export ATP-binding protein TagH (264 aa).

The region spanning V5 to K243 is the ABC transporter domain. Position 57 to 64 (G57 to S64) interacts with ATP.

This sequence belongs to the ABC transporter superfamily. Teichoic acids exporter (TC 3.A.1.104.1) family. As to quaternary structure, the complex is composed of two ATP-binding proteins (TagH) and two transmembrane proteins (TagG).

The protein localises to the cell membrane. It carries out the reaction ATP + H2O + teichoic acidSide 1 = ADP + phosphate + teichoic acidSide 2.. Functionally, part of the ABC transporter complex TagGH involved in teichoic acids export. Responsible for energy coupling to the transport system. This is Teichoic acids export ATP-binding protein TagH from Staphylococcus aureus (strain Mu50 / ATCC 700699).